Here is a 460-residue protein sequence, read N- to C-terminus: Alpha-amylase (460 aa).

The signal sequence occupies residues 1–21 (MASRTLSGALALAAAATAVLA). Residues Asn-121, Gln-167, and Asp-176 each contribute to the Ca(2+) site. Asp-206 functions as the Nucleophile in the catalytic mechanism. His-210 contributes to the Ca(2+) binding site. The active-site Proton donor is Glu-233.

This sequence belongs to the glycosyl hydrolase 13 family. Monomer. The cofactor is Ca(2+).

It carries out the reaction Endohydrolysis of (1-&gt;4)-alpha-D-glucosidic linkages in polysaccharides containing three or more (1-&gt;4)-alpha-linked D-glucose units.. The protein is Alpha-amylase (amy) of Streptomyces thermoviolaceus.